Reading from the N-terminus, the 625-residue chain is Phosphomethylpyrimidine synthase (625 aa).

Substrate is bound by residues asparagine 230, methionine 259, tyrosine 288, histidine 324, 344–346 (SRG), 385–388 (DGLR), and glutamate 424. Histidine 428 contributes to the Zn(2+) binding site. Tyrosine 451 serves as a coordination point for substrate. Histidine 492 contacts Zn(2+). The [4Fe-4S] cluster site is built by cysteine 572, cysteine 575, and cysteine 580.

The protein belongs to the ThiC family. Homodimer. Requires [4Fe-4S] cluster as cofactor.

The enzyme catalyses 5-amino-1-(5-phospho-beta-D-ribosyl)imidazole + S-adenosyl-L-methionine = 4-amino-2-methyl-5-(phosphooxymethyl)pyrimidine + CO + 5'-deoxyadenosine + formate + L-methionine + 3 H(+). It functions in the pathway cofactor biosynthesis; thiamine diphosphate biosynthesis. Functionally, catalyzes the synthesis of the hydroxymethylpyrimidine phosphate (HMP-P) moiety of thiamine from aminoimidazole ribotide (AIR) in a radical S-adenosyl-L-methionine (SAM)-dependent reaction. In Xanthomonas axonopodis pv. citri (strain 306), this protein is Phosphomethylpyrimidine synthase.